A 404-amino-acid polypeptide reads, in one-letter code: Glucose-1-phosphate adenylyltransferase (404 aa).

Residues Tyr99, Gly164, 179–180 (EK), and Ser197 contribute to the alpha-D-glucose 1-phosphate site.

The protein belongs to the bacterial/plant glucose-1-phosphate adenylyltransferase family.

The enzyme catalyses alpha-D-glucose 1-phosphate + ATP + H(+) = ADP-alpha-D-glucose + diphosphate. The protein operates within glycan biosynthesis; glycogen biosynthesis. Its function is as follows. Involved in the biosynthesis of ADP-glucose, a building block, required in the biosynthesis of maltose-1-phosphate (M1P) and in the elongation reactions to produce linear alpha-1,4-glucans. Catalyzes the reaction between ATP and alpha-D-glucose 1-phosphate (G1P) to produce pyrophosphate and ADP-Glc. This is Glucose-1-phosphate adenylyltransferase from Mycolicibacterium vanbaalenii (strain DSM 7251 / JCM 13017 / BCRC 16820 / KCTC 9966 / NRRL B-24157 / PYR-1) (Mycobacterium vanbaalenii).